The following is a 246-amino-acid chain: MAGHSKWANTRHRKAAQDAKRGKIFTKIIRELVTAAKLGGGDPDANPRLRAAVDKALSNNMTRDTLNRAIARGVGGDDDANMETIIYEGYGPGGTAIMIECLSDNRNRTVAEVRHAFSKCGGNLGTDGSVAYLFSKKGVITFEKGDEDTIMEAALEAGAEDVVTYDDGAIDVYTAWEEMGKVRDALEAAGLKADSAEVSMIPSTKADMDAETAPKLMRLIDMLEDCDDVQEVYHNGEISDEIAATL.

Residues 1–20 (MAGHSKWANTRHRKAAQDAK) form a disordered region.

This sequence belongs to the TACO1 family.

Its subcellular location is the cytoplasm. The protein is Probable transcriptional regulatory protein YebC of Shigella boydii serotype 4 (strain Sb227).